The following is a 101-amino-acid chain: uncharacterized protein (101 aa).

A signal peptide spans 1–18 (MSINALLYVLSLALLIWT). The chain crosses the membrane as a helical span at residues 62–82 (FQFDSIPSSSLSLSPFPFLFF).

Its subcellular location is the membrane. This is an uncharacterized protein from Saccharomyces cerevisiae (strain ATCC 204508 / S288c) (Baker's yeast).